Consider the following 189-residue polypeptide: Recombination protein RecR (189 aa).

The segment at 48–63 (CQTCFHLSAEPTCEIC) adopts a C4-type zinc-finger fold. One can recognise a Toprim domain in the interval 71–165 (GMLCVVADSR…EVSRIAYGLP (95 aa)).

Belongs to the RecR family.

In terms of biological role, may play a role in DNA repair. It seems to be involved in an RecBC-independent recombinational process of DNA repair. It may act with RecF and RecO. The chain is Recombination protein RecR from Synechococcus sp. (strain CC9311).